A 383-amino-acid chain; its full sequence is Deoxyuridylate hydroxymethyltransferase (383 aa).

Cys162 is an active-site residue.

It belongs to the thymidylate synthase family. Homodimer.

The enzyme catalyses dUMP + (6R)-5,10-methylene-5,6,7,8-tetrahydrofolate + H2O = 5-hydroxymethyl-dUMP + (6S)-5,6,7,8-tetrahydrofolate. Catalyzes formation of 5-hydroxymethyldeoxyuridylate (5HMdUMP) as a step in the pathway that replaces dTMP by thymidine hypermodifications in the viral genome. As a final result of the pathway of hypermodification, hydroxymethyluracil substitutes for a subset of thymidines in the viral DNA. These modifications probably prevent degradation of viral DNA by the host restriction-modification antiviral defense system. This is Deoxyuridylate hydroxymethyltransferase from Bacillus subtilis (Bacteriophage SP01).